A 188-amino-acid chain; its full sequence is Cytochrome b-245 chaperone 1 homolog (188 aa).

The helical transmembrane segment at 20-42 (SIRSWSLLVGILSVGLAAAYYST) threads the bilayer.

It belongs to the CYBC1 family.

It is found in the endoplasmic reticulum membrane. Functionally, functions as a chaperone necessary for a stable expression of the CYBA and CYBB subunits of the cytochrome b-245 heterodimer. This chain is Cytochrome b-245 chaperone 1 homolog (cybc1), found in Xenopus laevis (African clawed frog).